The primary structure comprises 259 residues: Ditrans,polycis-undecaprenyl-diphosphate synthase ((2E,6E)-farnesyl-diphosphate specific) (259 aa).

Asp-32 is an active-site residue. Asp-32 serves as a coordination point for Mg(2+). Substrate contacts are provided by residues 33-36, Trp-37, Arg-45, His-49, and 77-79; these read GNGR and STE. Asn-80 (proton acceptor) is an active-site residue. Substrate-binding positions include Trp-81, Arg-83, Arg-203, and 209–211; that span reads RIS. Glu-222 lines the Mg(2+) pocket.

The protein belongs to the UPP synthase family. In terms of assembly, homodimer. Mg(2+) is required as a cofactor.

The enzyme catalyses 8 isopentenyl diphosphate + (2E,6E)-farnesyl diphosphate = di-trans,octa-cis-undecaprenyl diphosphate + 8 diphosphate. In terms of biological role, catalyzes the sequential condensation of isopentenyl diphosphate (IPP) with (2E,6E)-farnesyl diphosphate (E,E-FPP) to yield (2Z,6Z,10Z,14Z,18Z,22Z,26Z,30Z,34E,38E)-undecaprenyl diphosphate (di-trans,octa-cis-UPP). UPP is the precursor of glycosyl carrier lipid in the biosynthesis of bacterial cell wall polysaccharide components such as peptidoglycan and lipopolysaccharide. In Lactiplantibacillus plantarum (strain ATCC BAA-793 / NCIMB 8826 / WCFS1) (Lactobacillus plantarum), this protein is Ditrans,polycis-undecaprenyl-diphosphate synthase ((2E,6E)-farnesyl-diphosphate specific) (uppS).